The chain runs to 218 residues: uncharacterized protein (218 aa).

One can recognise an ACT domain in the interval 4-83; the sequence is GISIEAENKV…IHSSLKKIYG (80 aa).

This is an uncharacterized protein from Methanocaldococcus jannaschii (strain ATCC 43067 / DSM 2661 / JAL-1 / JCM 10045 / NBRC 100440) (Methanococcus jannaschii).